We begin with the raw amino-acid sequence, 206 residues long: Small ribosomal subunit protein uS4 (206 aa).

Positions 96 to 161 (RRLDNVVYRM…QGRIQAALAL (66 aa)) constitute an S4 RNA-binding domain.

This sequence belongs to the universal ribosomal protein uS4 family. Part of the 30S ribosomal subunit. Contacts protein S5. The interaction surface between S4 and S5 is involved in control of translational fidelity.

One of the primary rRNA binding proteins, it binds directly to 16S rRNA where it nucleates assembly of the body of the 30S subunit. Its function is as follows. With S5 and S12 plays an important role in translational accuracy. The polypeptide is Small ribosomal subunit protein uS4 (Legionella pneumophila (strain Corby)).